The following is an 85-amino-acid chain: UPF0386 protein Arad_1912 (85 aa).

This sequence belongs to the UPF0386 family.

This chain is UPF0386 protein Arad_1912, found in Rhizobium rhizogenes (strain K84 / ATCC BAA-868) (Agrobacterium radiobacter).